Here is a 315-residue protein sequence, read N- to C-terminus: Ribosomal RNA large subunit methyltransferase F (315 aa).

The protein belongs to the methyltransferase superfamily. METTL16/RlmF family.

The protein localises to the cytoplasm. The catalysed reaction is adenosine(1618) in 23S rRNA + S-adenosyl-L-methionine = N(6)-methyladenosine(1618) in 23S rRNA + S-adenosyl-L-homocysteine + H(+). In terms of biological role, specifically methylates the adenine in position 1618 of 23S rRNA. The protein is Ribosomal RNA large subunit methyltransferase F of Aeromonas salmonicida (strain A449).